The primary structure comprises 326 residues: HTH-type transcriptional regulator BlaA (326 aa).

Residues 1–59 (MDVVNACRAFVKVSERGSFTVGAAAAQMSQSVASRRVAALEKHFGERLFDRASRRPSLT) form the HTH lysR-type domain. Residues 19-38 (FTVGAAAAQMSQSVASRRVA) constitute a DNA-binding region (H-T-H motif). The disordered stretch occupies residues 289–326 (TADHGPDPATGAGPGADAGTEPGARAEPGAPEEGAQAC). Residues 295–326 (DPATGAGPGADAGTEPGARAEPGAPEEGAQAC) are compositionally biased toward low complexity.

This sequence belongs to the LysR transcriptional regulatory family.

Functionally, positive regulator of the expression of the gene (blaB) for beta-lactamase. It binds to the blaL-blaA intercistronic region. The polypeptide is HTH-type transcriptional regulator BlaA (blaA) (Streptomyces cacaoi).